The following is a 341-amino-acid chain: Anthranilate phosphoribosyltransferase (341 aa).

5-phospho-alpha-D-ribose 1-diphosphate contacts are provided by residues G79, 82–83 (GD), T87, 89–92 (NIST), 107–115 (KHGNRAVSS), and S119. G79 contributes to the anthranilate binding site. A Mg(2+)-binding site is contributed by S91. N110 is an anthranilate binding site. R165 contributes to the anthranilate binding site. Positions 224 and 225 each coordinate Mg(2+).

The protein belongs to the anthranilate phosphoribosyltransferase family. As to quaternary structure, homodimer. Mg(2+) serves as cofactor.

The catalysed reaction is N-(5-phospho-beta-D-ribosyl)anthranilate + diphosphate = 5-phospho-alpha-D-ribose 1-diphosphate + anthranilate. Its pathway is amino-acid biosynthesis; L-tryptophan biosynthesis; L-tryptophan from chorismate: step 2/5. In terms of biological role, catalyzes the transfer of the phosphoribosyl group of 5-phosphorylribose-1-pyrophosphate (PRPP) to anthranilate to yield N-(5'-phosphoribosyl)-anthranilate (PRA). The sequence is that of Anthranilate phosphoribosyltransferase from Bacillus cereus (strain B4264).